The primary structure comprises 804 residues: Protein-lysine N-methyltransferase SMYD4 (804 aa).

Residue 112–114 (RSA) coordinates S-adenosyl-L-methionine. In terms of domain architecture, SET spans 233–574 (SSIGLCVDPL…KGQEILHCYG (342 aa)). 8 residues coordinate Zn(2+): cysteine 296, cysteine 299, cysteine 309, cysteine 312, cysteine 318, cysteine 322, histidine 331, and cysteine 335. The MYND-type zinc-finger motif lies at 296–335 (CHRCLKHTLATVPCDGCSYAKYCSQECLQQAWELYHRTEC). Residues asparagine 427, 539–540 (NH), tyrosine 573, and phenylalanine 595 each bind S-adenosyl-L-methionine.

The protein belongs to the class V-like SAM-binding methyltransferase superfamily. Interacts (via MYND-type zinc finger) with HDAC1.

The protein localises to the nucleus. The protein resides in the cytoplasm. The catalysed reaction is L-lysyl-[protein] + S-adenosyl-L-methionine = N(6)-methyl-L-lysyl-[protein] + S-adenosyl-L-homocysteine + H(+). Functionally, protein-lysine N-methyltransferase. Monomethylates PRMT5, modulating its transcriptional activity. May also act as a histone methyltransferase. Plays a critical role in cardiac development. Acts as a key epigenetic regulator of gene expression during cardiac development via its dual activities as a methyltransferase and negative regulator of HDAC1. In Homo sapiens (Human), this protein is Protein-lysine N-methyltransferase SMYD4.